Here is a 635-residue protein sequence, read N- to C-terminus: Endo-1,4-beta-xylanase B (635 aa).

A GH10 domain is found at 1–337 (MNLKTAYEPY…KEAYYAVLKA (337 aa)). Glu-150 functions as the Proton donor in the catalytic mechanism. Residue Glu-255 is the Nucleophile of the active site.

Belongs to the glycosyl hydrolase 10 (cellulase F) family.

It catalyses the reaction Endohydrolysis of (1-&gt;4)-beta-D-xylosidic linkages in xylans.. It functions in the pathway glycan degradation; xylan degradation. B.fibrisolvens is located in the rumen of ruminant animals, where it contributes to the animal's digestion of plant material by hydrolyzing hemicellulose with its xylanases. This is Endo-1,4-beta-xylanase B (xynB) from Butyrivibrio fibrisolvens.